The following is an 88-amino-acid chain: UPF0473 protein CLL_A1177 (88 aa).

The protein belongs to the UPF0473 family.

The chain is UPF0473 protein CLL_A1177 from Clostridium botulinum (strain Eklund 17B / Type B).